The sequence spans 34 residues: Unknown protein 5 (34 aa).

In Pseudotsuga menziesii (Douglas-fir), this protein is Unknown protein 5.